The following is a 199-amino-acid chain: Recombination protein RecR (199 aa).

The C4-type zinc-finger motif lies at 58 to 73 (CQTCRILSETDLCSLC). Positions 81–176 (GQLCVVEMPS…TTTRIAHGVP (96 aa)) constitute a Toprim domain.

The protein belongs to the RecR family.

Functionally, may play a role in DNA repair. It seems to be involved in an RecBC-independent recombinational process of DNA repair. It may act with RecF and RecO. The sequence is that of Recombination protein RecR from Nitrosococcus oceani (strain ATCC 19707 / BCRC 17464 / JCM 30415 / NCIMB 11848 / C-107).